The primary structure comprises 351 residues: Histidinol-phosphate aminotransferase (351 aa).

N6-(pyridoxal phosphate)lysine is present on Lys213.

Belongs to the class-II pyridoxal-phosphate-dependent aminotransferase family. Histidinol-phosphate aminotransferase subfamily. Homodimer. It depends on pyridoxal 5'-phosphate as a cofactor.

The enzyme catalyses L-histidinol phosphate + 2-oxoglutarate = 3-(imidazol-4-yl)-2-oxopropyl phosphate + L-glutamate. The protein operates within amino-acid biosynthesis; L-histidine biosynthesis; L-histidine from 5-phospho-alpha-D-ribose 1-diphosphate: step 7/9. The protein is Histidinol-phosphate aminotransferase of Thermoanaerobacter pseudethanolicus (strain ATCC 33223 / 39E) (Clostridium thermohydrosulfuricum).